The primary structure comprises 356 residues: Putative aminopeptidase FrvX (356 aa).

The a divalent metal cation site is built by H61 and D175. E205 serves as the catalytic Proton acceptor. Residues E206, D228, and H316 each coordinate a divalent metal cation.

Belongs to the peptidase M42 family. The cofactor is a divalent metal cation.

This chain is Putative aminopeptidase FrvX (frvX), found in Escherichia coli (strain K12).